Reading from the N-terminus, the 671-residue chain is Probable boron transporter 6 (671 aa).

At 1–37 (MKSEGESGPFQGILRDIEGRRKCYKQDWIRGIKTGIR) the chain is on the cytoplasmic side. The helical transmembrane segment at 38–58 (ILAPTCYIFFASSLPVVAFGE) threads the bilayer. The Extracellular segment spans residues 59-77 (QLSKHTGGALSAVETLAST). A helical transmembrane segment spans residues 78 to 98 (SICGIIHAIFGGQPLLIVGVA). Residues 99–123 (EPTIIMYTYLYSFCISRPDIGRELY) lie on the Cytoplasmic side of the membrane. A helical membrane pass occupies residues 124-144 (LAWVAWVCVWTSVLLILLSIF). Residues 145–157 (NAGTIITRFTRIA) lie on the Extracellular side of the membrane. A helical membrane pass occupies residues 158–178 (GELFGMLIAVLFLQEAIKGLI). The Cytoplasmic portion of the chain corresponds to 179–195 (SEFHAPEIKNQETGKSH). The helical transmembrane segment at 196 to 216 (FLLIYANGLLAVIFSLGLLIT) threads the bilayer. Residues 217–235 (ALKSRRAKSWKYGFGWLRS) lie on the Extracellular side of the membrane. The helical transmembrane segment at 236–256 (FIGDYGVPLMVLLWTALSYTV) threads the bilayer. Over 257–291 (PSEVLPSVPRRLFCPLPWEPASLYHWTVVKDMGKV) the chain is Cytoplasmic. The helical transmembrane segment at 292-312 (PIMYILAAFIPGVMIAGLYFF) threads the bilayer. At 313-332 (DHSVASQMAQQKEFNLKNPS) the chain is on the extracellular side. The helical transmembrane segment at 333 to 353 (AYHYDIFLLGIITLICGLLGL) threads the bilayer. The Cytoplasmic segment spans residues 354–469 (PPSNGVLPQA…EQRVSNLLQS (116 aa)). Residues 470–490 (VLVGLTLLAVTVIKMIPSSVL) form a helical membrane-spanning segment. Residues 491–557 (WGYFAYMAID…QLVYFLLCYG (67 aa)) are Extracellular-facing. Residues 558 to 578 (MTWIPMAGIFFPALFFLLISI) traverse the membrane as a helical segment. The Cytoplasmic segment spans residues 579–671 (REHLLPKLFD…EEKHVTFEPH (93 aa)).

Belongs to the anion exchanger (TC 2.A.31.3) family.

The protein resides in the membrane. In terms of biological role, probable boron transporter. Boron is essential for maintaining the integrity of plants cell walls. This chain is Probable boron transporter 6 (BOR6), found in Arabidopsis thaliana (Mouse-ear cress).